A 323-amino-acid chain; its full sequence is uncharacterized protein (323 aa).

The interval 1–21 (MGSYYSTESTKSNESNETTNN) is disordered. Gly2 carries N-myristoyl glycine; by host lipidation.

This is an uncharacterized protein from Acanthamoeba polyphaga (Amoeba).